A 128-amino-acid chain; its full sequence is LIM domain-containing protein 2 (128 aa).

Met1 is subject to N-acetylmethionine. Positions 1–25 (MFQAAGAAQATPSHEAKGSSGSSTV) are disordered. One can recognise an LIM zinc-binding domain in the interval 39-99 (ETCAACQKTV…RPHFQQLFKS (61 aa)). The Zn(2+) site is built by Cys41, Cys44, His62, Cys65, Cys68, Cys71, Cys89, and His92.

In terms of assembly, interacts with ILK.

It is found in the cytoplasm. The protein resides in the nucleus. In terms of biological role, acts as an activator of the protein-kinase ILK, thereby regulating cell motility. The protein is LIM domain-containing protein 2 of Mus musculus (Mouse).